The following is a 361-amino-acid chain: Spermidine/putrescine import ATP-binding protein PotA (361 aa).

One can recognise an ABC transporter domain in the interval 4–234; it reads LEIKNVVKRF…PKNRFVADFL (231 aa). An ATP-binding site is contributed by 36-43; that stretch reads GPSGCGKT.

The protein belongs to the ABC transporter superfamily. Spermidine/putrescine importer (TC 3.A.1.11.1) family. In terms of assembly, the complex is composed of two ATP-binding proteins (PotA), two transmembrane proteins (PotB and PotC) and a solute-binding protein (PotD).

Its subcellular location is the cell inner membrane. The catalysed reaction is ATP + H2O + polyamine-[polyamine-binding protein]Side 1 = ADP + phosphate + polyamineSide 2 + [polyamine-binding protein]Side 1.. In terms of biological role, part of the ABC transporter complex PotABCD involved in spermidine/putrescine import. Responsible for energy coupling to the transport system. This chain is Spermidine/putrescine import ATP-binding protein PotA, found in Chromobacterium violaceum (strain ATCC 12472 / DSM 30191 / JCM 1249 / CCUG 213 / NBRC 12614 / NCIMB 9131 / NCTC 9757 / MK).